Reading from the N-terminus, the 242-residue chain is Probable transcriptional regulatory protein Dred_1658 (242 aa).

The protein belongs to the TACO1 family.

It is found in the cytoplasm. In Desulforamulus reducens (strain ATCC BAA-1160 / DSM 100696 / MI-1) (Desulfotomaculum reducens), this protein is Probable transcriptional regulatory protein Dred_1658.